Reading from the N-terminus, the 548-residue chain is MFS-type transporter TOXA (548 aa).

Over residues 1–12 the composition is skewed to polar residues; it reads MDEQIVSASSNV. The interval 1–33 is disordered; sequence MDEQIVSASSNVKDGVEKQPVKDREDVDANVVP. Positions 14–27 are enriched in basic and acidic residues; that stretch reads DGVEKQPVKDREDV. A run of 14 helical transmembrane segments spans residues 43-63, 85-105, 114-134, 146-166, 177-197, 204-224, 250-270, 280-300, 316-336, 357-377, 382-402, 411-431, 444-464, and 518-538; these read ISLISLFSIVMSLGAAAFLGA, AVAWYGAIYLLMSGTTQPLFG, KWLFITCLIVLQLGSLVCALA, VAGIGAGGILSGALNIVALIV, MIGALECVALIIGPIIGGAIA, WCFWINLPIGAAVCAILLFFF, IGAGMIISSLVCLSLALQWGG, VVALLVVFGVLFLSASGHQYW, GFLLSLFNGLCFGGVQYAALY, MLPIVGAIIGVNIVAGITISF, APFIVIATVLASVGSGLLYTF, IIGYQLIYGAGSGAGVQQAFI, YASASVLLMNSMSGVITLCVC, and FLVAIVLSCASVLGWPFLSWA.

It belongs to the major facilitator superfamily. TCR/Tet family.

The protein resides in the membrane. MFS-type transporter; part of the diffuse TOX2 gene cluster that mediates the biosynthesis of the HC-toxin, cyclic tetrapeptide of structure cyclo(D-Pro-L-Ala-D-Ala-L-Aeo), where Aeo stands for 2-amino-9,10-epoxi-8-oxodecanoic acid. HC-toxin is a determinant of specificity and virulence in the interaction between the producing fungus and its host, maize. TOXA acts as a HC-toxin efflux pump which contributes to self-protection against HC-toxin and/or the secretion of HC-toxin into the extracellular milieu. This chain is MFS-type transporter TOXA, found in Cochliobolus carbonum (Maize leaf spot fungus).